A 160-amino-acid polypeptide reads, in one-letter code: Cytochrome b6-f complex subunit 4 (160 aa).

The next 3 helical transmembrane spans lie at 36–56, 95–115, and 131–151; these read LLYIFPVVILGTIACNVGLAV, LLGVLLMVSVPAGLVTVPFLE, and TVFLIGTAVSLWLGIGATLPI.

This sequence belongs to the cytochrome b family. PetD subfamily. As to quaternary structure, the 4 large subunits of the cytochrome b6-f complex are cytochrome b6, subunit IV (17 kDa polypeptide, petD), cytochrome f and the Rieske protein, while the 4 small subunits are petG, petL, petM and petN. The complex functions as a dimer.

Its subcellular location is the plastid. It is found in the chloroplast thylakoid membrane. Functionally, component of the cytochrome b6-f complex, which mediates electron transfer between photosystem II (PSII) and photosystem I (PSI), cyclic electron flow around PSI, and state transitions. The polypeptide is Cytochrome b6-f complex subunit 4 (Lotus japonicus (Lotus corniculatus var. japonicus)).